We begin with the raw amino-acid sequence, 476 residues long: Aspartyl/glutamyl-tRNA(Asn/Gln) amidotransferase subunit B (476 aa).

This sequence belongs to the GatB/GatE family. GatB subfamily. In terms of assembly, heterotrimer of A, B and C subunits.

It carries out the reaction L-glutamyl-tRNA(Gln) + L-glutamine + ATP + H2O = L-glutaminyl-tRNA(Gln) + L-glutamate + ADP + phosphate + H(+). The catalysed reaction is L-aspartyl-tRNA(Asn) + L-glutamine + ATP + H2O = L-asparaginyl-tRNA(Asn) + L-glutamate + ADP + phosphate + 2 H(+). Allows the formation of correctly charged Asn-tRNA(Asn) or Gln-tRNA(Gln) through the transamidation of misacylated Asp-tRNA(Asn) or Glu-tRNA(Gln) in organisms which lack either or both of asparaginyl-tRNA or glutaminyl-tRNA synthetases. The reaction takes place in the presence of glutamine and ATP through an activated phospho-Asp-tRNA(Asn) or phospho-Glu-tRNA(Gln). This chain is Aspartyl/glutamyl-tRNA(Asn/Gln) amidotransferase subunit B, found in Clostridium botulinum (strain ATCC 19397 / Type A).